A 449-amino-acid chain; its full sequence is Early 53 kDa protein (449 aa).

The segment at 1–68 (MNRFFRENNI…CTSPAKPLEH (68 aa)) is disordered. Pro residues predominate over residues 31–42 (NSPPSPVRPPPK). The segment at 379-399 (CKLCKKTKLYYKNPVLYCTKC) adopts a C4-type zinc-finger fold.

Its subcellular location is the virion. It localises to the host cytoplasm. The protein localises to the host nucleus. The protein resides in the host cell membrane. May act as a packaging protein or as a structural component associated with intranuclear baculovirus virion assembly. The protein is Early 53 kDa protein (ME53) of Autographa californica nuclear polyhedrosis virus (AcMNPV).